The primary structure comprises 379 residues: Stimulator of interferon genes protein (379 aa).

Topologically, residues 1 to 17 (MPYSNLHPSIPRPRSYR) are cytoplasmic. A mediates interaction with ZDHHC1 and ZDHHC11 region spans residues 1 to 190 (MPYSNLHPSI…MFNQLHNNML (190 aa)). A helical membrane pass occupies residues 18–34 (FKLAAFVLLVGSLMSLW). The Lumenal portion of the chain corresponds to 35–44 (MTGEPPSHTL). Residues 45 to 69 (HYLALHVASQQLGLLLKKLCCLAEE) form a helical membrane-spanning segment. Topologically, residues 70–91 (LCHVQSRYQGSYWKAVRACVGS) are cytoplasmic. Residue cysteine 88 is the site of S-palmitoyl cysteine attachment. A helical membrane pass occupies residues 92–106 (PICFMALILLSFYFY). The Lumenal segment spans residues 107 to 116 (CSLENTSDLR). A helical membrane pass occupies residues 117 to 134 (LAWHLGILVLSKSLSMTL). Topologically, residues 135-379 (DLQSLAPAEV…QPLPLRTDLI (245 aa)) are cytoplasmic. Lysine 151 participates in a covalent cross-link: Glycyl lysine isopeptide (Lys-Gly) (interchain with G-Cter in ubiquitin). Residues 153-340 (FNVAHGLAWS…RHIRQEEKEE (188 aa)) are cyclic dinucleotide-binding domain (CBD). Residue 162 to 167 (SYYIGY) participates in 2',3'-cGAMP binding. Residue glycine 166 coordinates 3',3'-c-di-GMP. Residue tyrosine 167 participates in 2',3'-cUAMP binding. Residue lysine 236 forms a Glycyl lysine isopeptide (Lys-Gly) (interchain with G-Cter in ubiquitin) linkage. Arginine 238 lines the 2',3'-cUAMP pocket. 2',3'-cGAMP contacts are provided by residues 238-241 (RAYS) and threonine 263. Residues 238–241 (RAYS) and threonine 263 each bind 3',3'-c-di-GMP. A Phosphoserine modification is found at serine 241. Threonine 263 lines the 2',3'-cUAMP pocket. A Glycyl lysine isopeptide (Lys-Gly) (interchain with G-Cter in SUMO) cross-link involves residue lysine 338. The C-terminal tail (CTT) stretch occupies residues 340-379 (EVTMSGPPTSVAPRPSLLSQEPRLLISGMEQPLPLRTDLI). The residue at position 355 (serine 355) is a Phosphoserine. A phosphoserine; by TBK1 mark is found at serine 358 and serine 366. The pLxIS motif motif lies at 363-366 (LLIS).

The protein belongs to the STING family. In terms of assembly, homodimer; forms a homodimer in absence of cyclic nucleotide (c-di-GMP or cGAMP); 'Lys-63'-linked ubiquitination at Lys-151 is required for homodimerization. Homotetramer; in presence of cyclic nucleotide (c-di-GMP or cGAMP), forms tetramers and higher-order oligomers through side-by-side packing. Interacts (when phosphorylated) with IRF3; following activation and phosphorylation on the pLxIS motif by TBK1, recruits IRF3. Interacts with RIGI, MAVS and SSR2. Interacts with RNF5 and TRIM56. Interacts with TBK1; when homodimer, leading to subsequent production of IFN-beta. Interacts with IFIT1 and IFIT2. Interacts with TRIM29; this interaction induces STING1 ubiquitination and subsequent degradation. Associates with the MHC-II complex. Interacts with STEEP1; interaction takes place upon cGAMP-activation and STING1 phosphorylation by MAP3K7/TAK1 and promotes STING1 translocation to COPII vesicles. Interacts with SEC24A, SEC24B and SEC24C; promoting translocation to COPII vesicles. Interacts (when ubiquitinated) with SQSTM1; leading to relocalization to autophagosomes. Interacts with SURF4. Interacts with HNRNPA2B1. Interacts with ZDHHC1; ZDHHC1 constitutively interacts with STING1 and in presence of DNA viruses activates it by promoting its cGAMP-induced oligomerization and the recruitment of downstream signaling components. Interacts with ZDHHC11; in presence of DNA viruses promotes the recruitment of IRF3 to STING1. Interacts with TOMM70. Interacts with TAB1; promoting recruitment of TAB1 to the endoplasmic reticulum membrane and subsequent activation of MAP3K7/TAK1. Interacts (via transmembrane domain) with TMEM203. Interacts with DDX41. Post-translationally, phosphorylation by TBK1 leads to activation and production of IFN-beta. Following cyclic nucleotide (c-di-GMP or cGAMP)-binding, activation and translocation from the endoplasmic reticulum, STING1 is phosphorylated by TBK1 at Ser-366 in the pLxIS motif. The phosphorylated pLxIS motif constitutes an IRF3-binding motif, leading to recruitment of the transcription factor IRF3 to induce type-I interferons and other cytokines. Phosphorylated on tyrosine residues upon MHC-II aggregation. Dephosphorylation by PPP6C leads to inactivation and decreased production of IFN-beta. Phosphorylation at Ser-358 is also required to activate IRF3. Phosphorylation at Ser-355 by MAP3K7/TAK1 facilitates its interaction with STEEP1, promoting STING1 translocation to COPII vesicles. Ubiquitinated. Ubiquitinated via 'Lys-63'-linked ubiquitin chains in response to double-stranded DNA treatment, leading to relocalization to autophagosomes and subsequent degradation; this process is dependent on SQSTM1. 'Lys-63'-linked ubiquitination mediated by TRIM56 at Lys-151 promotes homodimerization and recruitment of the antiviral kinase TBK1 and subsequent production of IFN-beta. 'Lys-48'-linked polyubiquitination at Lys-151 occurring after viral infection is mediated by RNF5 and leads to proteasomal degradation. 'Lys-11'-linked polyubiquitination at Lys-151 by RNF26 leads to stabilize STING1: it protects STING1 from RNF5-mediated 'Lys-48'-linked polyubiquitination. 'Lys-33'-linked and 'Lys-48'-linked deubiquitinated by USP20; leading to its stabilization and promotion of innate antiviral response. 'Lys-48'-linked deubiquitinated by USP44; leading to its stabilization and promotion of innate antiviral response. Deubiquitinated by USP13; leading to inhibition of innate antiviral response. 'Lys-63'-linked deubiquitinated by USP49; leading to inhibition of the subsequent recruitment of TBK1 to the signaling complex. 'Lys-63'-linked ubiquitination mediated by RNF39 promotes the activation of the cGAS-STING pathway. In terms of processing, sumoylated at Lys-338 by TRIM38 during the early phase of viral infection, promoting its stability by preventing its relocalization to autophagosomes and subsequent degradation. Desumoylated by SENP2 during the late phase of viral infection. Post-translationally, palmitoylation takes place in the Golgi apparatus and creates a platform for the recruitment of TBK1.

The protein resides in the endoplasmic reticulum membrane. The protein localises to the cytoplasm. It localises to the perinuclear region. It is found in the endoplasmic reticulum-Golgi intermediate compartment membrane. Its subcellular location is the golgi apparatus membrane. The protein resides in the cytoplasmic vesicle. The protein localises to the autophagosome membrane. It localises to the mitochondrion outer membrane. It is found in the cell membrane. The catalysed reaction is H(+)(in) = H(+)(out). In contrast to mouse protein, not activated by anticancer molecule 5,6-dimethylxanthenone 4-acetic acid (DMXAA). Its function is as follows. Facilitator of innate immune signaling that acts as a sensor of cytosolic DNA from bacteria and viruses and promotes the production of type I interferon (IFN-alpha and IFN-beta). Innate immune response is triggered in response to non-CpG double-stranded DNA from viruses and bacteria delivered to the cytoplasm. Acts by binding cyclic dinucleotides: recognizes and binds cyclic di-GMP (c-di-GMP), a second messenger produced by bacteria, cyclic UMP-AMP (2',3'-cUAMP), and cyclic GMP-AMP (cGAMP), a messenger produced by CGAS in response to DNA virus in the cytosol. Upon binding to c-di-GMP, cUAMP or cGAMP, STING1 oligomerizes, translocates from the endoplasmic reticulum and is phosphorylated by TBK1 on the pLxIS motif, leading to recruitment and subsequent activation of the transcription factor IRF3 to induce expression of type I interferon and exert a potent anti-viral state. Exhibits 2',3' phosphodiester linkage-specific ligand recognition: can bind both 2'-3' linked cGAMP (2'-3'-cGAMP) and 3'-3' linked cGAMP but is preferentially activated by 2'-3' linked cGAMP. The preference for 2'-3'-cGAMP, compared to other linkage isomers is probably due to the ligand itself, whichs adopts an organized free-ligand conformation that resembles the STING1-bound conformation and pays low energy costs in changing into the active conformation. In addition to promote the production of type I interferons, plays a direct role in autophagy. Following cGAMP-binding, STING1 buds from the endoplasmic reticulum into COPII vesicles, which then form the endoplasmic reticulum-Golgi intermediate compartment (ERGIC). The ERGIC serves as the membrane source for WIPI2 recruitment and LC3 lipidation, leading to formation of autophagosomes that target cytosolic DNA or DNA viruses for degradation by the lysosome. Promotes autophagy by acting as a proton channel that directs proton efflux from the Golgi to facilitate MAP1LC3B/LC3B lipidation. The autophagy- and interferon-inducing activities can be uncoupled and autophagy induction is independent of TBK1 phosphorylation. Autophagy is also triggered upon infection by bacteria: following c-di-GMP-binding, which is produced by live Gram-positive bacteria, promotes reticulophagy. May be involved in translocon function, the translocon possibly being able to influence the induction of type I interferons. May be involved in transduction of apoptotic signals via its association with the major histocompatibility complex class II (MHC-II). The chain is Stimulator of interferon genes protein from Rattus norvegicus (Rat).